The primary structure comprises 555 residues: Exodeoxyribonuclease 7 large subunit (555 aa).

The protein belongs to the XseA family. In terms of assembly, heterooligomer composed of large and small subunits.

Its subcellular location is the cytoplasm. It carries out the reaction Exonucleolytic cleavage in either 5'- to 3'- or 3'- to 5'-direction to yield nucleoside 5'-phosphates.. In terms of biological role, bidirectionally degrades single-stranded DNA into large acid-insoluble oligonucleotides, which are then degraded further into small acid-soluble oligonucleotides. This chain is Exodeoxyribonuclease 7 large subunit, found in Chlamydia felis (strain Fe/C-56) (Chlamydophila felis).